The sequence spans 468 residues: Aspartate ammonia-lyase (468 aa).

Positions 101, 140, 141, 142, 187, and 188 each coordinate L-aspartate. Residues 317–326 are SS loop; the sequence is GSSIMPGKVN. Catalysis depends on serine 318, which acts as the Proton acceptor. L-aspartate is bound by residues serine 319 and lysine 324.

This sequence belongs to the class-II fumarase/aspartase family. Aspartase subfamily. In terms of assembly, homotetramer.

It carries out the reaction L-aspartate = fumarate + NH4(+). With respect to regulation, unlike E.coli aspartase, the enzyme is not activated by the presence of divalent metal ions at alkaline pH. Functionally, catalyzes the reversible conversion of L-aspartate to fumarate and ammonia. Is highly specific for L-aspartate in the deamination reaction, and cannot use alternative substrates such as D-aspartic acid, alpha-methyl-DL-aspartic acid, beta-methyl-DL-aspartic acid or L-glutamate. In the reverse reaction, alternative nucleophiles (such as hydroxylamine, hydrazine, methoxylamine and methylamine) can replace ammonia in vitro, leading to the formation of N-substituted aspartic acid derivatives. This Bacillus sp protein is Aspartate ammonia-lyase.